We begin with the raw amino-acid sequence, 179 residues long: uncharacterized protein (179 aa).

The first 19 residues, 1 to 19, serve as a signal peptide directing secretion; that stretch reads MNTNVFRLLLLGSLFSLSA. The N-palmitoyl cysteine moiety is linked to residue C20. The S-diacylglycerol cysteine moiety is linked to residue C20.

Its subcellular location is the cell membrane. This is an uncharacterized protein from Escherichia coli (strain K12).